Here is a 456-residue protein sequence, read N- to C-terminus: RuvB-like 1 (456 aa).

Residues 1-20 (MKIEEVKSTTKTQRIASHSH) form a disordered region. 70–77 (GPPGTGKT) contributes to the ATP binding site.

It belongs to the RuvB family. As to quaternary structure, forms homohexameric rings. Can form a dodecamer with ruvbl2 made of two stacked hexameric rings. Is a component of the RNA polymerase II holoenzyme complex. Component of the chromatin-remodeling Ino80 complex. Component of some MLL1/MLL complex.

It localises to the nucleus. It is found in the dynein axonemal particle. The catalysed reaction is ATP + H2O = ADP + phosphate + H(+). Its function is as follows. Has single-stranded DNA-stimulated ATPase and ATP-dependent DNA helicase (3' to 5') activity suggesting a role in nuclear processes such as recombination and transcription. Proposed core component of the chromatin remodeling Ino80 complex which exhibits DNA- and nucleosome-activated ATPase activity and catalyzes ATP-dependent nucleosome sliding. May act as a negative regulator of embryonic heart growth. In Danio rerio (Zebrafish), this protein is RuvB-like 1 (ruvbl1).